We begin with the raw amino-acid sequence, 75 residues long: Sec-independent protein translocase protein TatA (75 aa).

Residues M1–G21 form a helical membrane-spanning segment. Residues K41–R75 are disordered.

It belongs to the TatA/E family. The Tat system comprises two distinct complexes: a TatABC complex, containing multiple copies of TatA, TatB and TatC subunits, and a separate TatA complex, containing only TatA subunits. Substrates initially bind to the TatABC complex, which probably triggers association of the separate TatA complex to form the active translocon.

Its subcellular location is the cell inner membrane. Functionally, part of the twin-arginine translocation (Tat) system that transports large folded proteins containing a characteristic twin-arginine motif in their signal peptide across membranes. TatA could form the protein-conducting channel of the Tat system. The sequence is that of Sec-independent protein translocase protein TatA from Xanthomonas axonopodis pv. citri (strain 306).